The sequence spans 87 residues: Type 3 secretion system needle filament protein (87 aa).

This sequence belongs to the SctF family. As to quaternary structure, the core secretion machinery of the T3SS is composed of approximately 20 different proteins, including cytoplasmic components, a base, an export apparatus and a needle. This subunit polymerizes and forms the helical needle filament. In Y.enterocolitica E40, the needles are composed of 139 (plus-minus 19) YscF/SctF subunits.

Its subcellular location is the secreted. The protein resides in the cell surface. Its activity is regulated as follows. The secretion and/or polymerization may be controlled by the type III secretion system regulator YopR. Component of the type III secretion system (T3SS), also called injectisome, which is used to inject bacterial effector proteins into eukaryotic host cells. YscF/SctF forms the external needle filament that protrudes from the bacterial surface. The needle is not sufficient by itself for the formation of a pore allowing translocation of the Yop effectors across the host cell membrane. The protein is Type 3 secretion system needle filament protein of Yersinia enterocolitica.